The primary structure comprises 369 residues: Methionine aminopeptidase 1B, chloroplastic (369 aa).

Residues 1-61 (MASSVFLSSF…YSPRQFHVSA (61 aa)) constitute a chloroplast transit peptide. Residue His-199 coordinates substrate. 3 residues coordinate a divalent metal cation: Asp-216, Asp-227, and His-290. His-297 serves as a coordination point for substrate. The a divalent metal cation site is built by Glu-322 and Glu-353.

Belongs to the peptidase M24A family. Methionine aminopeptidase type 1 subfamily. Co(2+) serves as cofactor. The cofactor is Zn(2+). Requires Mn(2+) as cofactor. It depends on Fe(2+) as a cofactor. In terms of tissue distribution, ubiquitous. Preferentially expressed in green tissues.

It is found in the plastid. It localises to the chloroplast. It catalyses the reaction Release of N-terminal amino acids, preferentially methionine, from peptides and arylamides.. Functionally, removes the N-terminal methionine from nascent proteins. The N-terminal methionine is often cleaved when the second residue in the primary sequence is small and uncharged (Met-Ala-, Cys, Gly, Pro, Ser, Thr, or Val). This chain is Methionine aminopeptidase 1B, chloroplastic (MAP1B), found in Arabidopsis thaliana (Mouse-ear cress).